The chain runs to 778 residues: LPS-assembly protein LptD (778 aa).

Positions 1–23 (MKTRYSVLSVAMTAAFYTQYAQA) are cleaved as a signal peptide.

It belongs to the LptD family. Component of the lipopolysaccharide transport and assembly complex. Interacts with LptE and LptA.

The protein localises to the cell outer membrane. Together with LptE, is involved in the assembly of lipopolysaccharide (LPS) at the surface of the outer membrane. The polypeptide is LPS-assembly protein LptD (Actinobacillus pleuropneumoniae serotype 7 (strain AP76)).